An 82-amino-acid chain; its full sequence is UPF0291 protein LVIS_1359 (82 aa).

Belongs to the UPF0291 family.

The protein resides in the cytoplasm. The sequence is that of UPF0291 protein LVIS_1359 from Levilactobacillus brevis (strain ATCC 367 / BCRC 12310 / CIP 105137 / JCM 1170 / LMG 11437 / NCIMB 947 / NCTC 947) (Lactobacillus brevis).